We begin with the raw amino-acid sequence, 100 residues long: Integration host factor subunit beta (100 aa).

Belongs to the bacterial histone-like protein family. Heterodimer of an alpha and a beta chain.

In terms of biological role, this protein is one of the two subunits of integration host factor, a specific DNA-binding protein that functions in genetic recombination as well as in transcriptional and translational control. This Agrobacterium fabrum (strain C58 / ATCC 33970) (Agrobacterium tumefaciens (strain C58)) protein is Integration host factor subunit beta.